Consider the following 192-residue polypeptide: Pyridoxal 5'-phosphate synthase subunit PdxT (192 aa).

Position 46-48 (46-48 (GES)) interacts with L-glutamine. The active-site Nucleophile is C75. L-glutamine-binding positions include R101 and 129–130 (IR). Residues H166 and E168 each act as charge relay system in the active site.

Belongs to the glutaminase PdxT/SNO family. As to quaternary structure, in the presence of PdxS, forms a dodecamer of heterodimers. Only shows activity in the heterodimer.

It catalyses the reaction aldehydo-D-ribose 5-phosphate + D-glyceraldehyde 3-phosphate + L-glutamine = pyridoxal 5'-phosphate + L-glutamate + phosphate + 3 H2O + H(+). The catalysed reaction is L-glutamine + H2O = L-glutamate + NH4(+). The protein operates within cofactor biosynthesis; pyridoxal 5'-phosphate biosynthesis. Catalyzes the hydrolysis of glutamine to glutamate and ammonia as part of the biosynthesis of pyridoxal 5'-phosphate. The resulting ammonia molecule is channeled to the active site of PdxS. This is Pyridoxal 5'-phosphate synthase subunit PdxT from Staphylococcus carnosus (strain TM300).